The chain runs to 240 residues: Probable transcriptional regulator ycf27 (240 aa).

The Response regulatory domain occupies 5 to 118 (KILVIDDEAS…ELEARIRSVL (114 aa)). Asp54 bears the 4-aspartylphosphate mark. Residues 74-92 (DVPIIMLTALSDVSDRITG) constitute a DNA-binding region (H-T-H motif). Residues 133 to 234 (SGIINIGFLK…ARGTGYLFQR (102 aa)) constitute a DNA-binding region (ompR/PhoB-type).

The protein resides in the plastid. Its subcellular location is the chloroplast. In terms of biological role, probable promoter-specific protein mediating the interaction between DNA and RNA polymerase. This chain is Probable transcriptional regulator ycf27 (ycf27), found in Porphyridium aerugineum (Red microalga).